The following is a 71-amino-acid chain: ATP synthase subunit c (71 aa).

The next 2 helical transmembrane spans lie at 5–25 (VLAA…IGIA) and 46–66 (FFIL…VMAF).

It belongs to the ATPase C chain family. As to quaternary structure, F-type ATPases have 2 components, F(1) - the catalytic core - and F(0) - the membrane proton channel. F(1) has five subunits: alpha(3), beta(3), gamma(1), delta(1), epsilon(1). F(0) has three main subunits: a(1), b(2) and c(10-14). The alpha and beta chains form an alternating ring which encloses part of the gamma chain. F(1) is attached to F(0) by a central stalk formed by the gamma and epsilon chains, while a peripheral stalk is formed by the delta and b chains.

The protein localises to the cell membrane. F(1)F(0) ATP synthase produces ATP from ADP in the presence of a proton or sodium gradient. F-type ATPases consist of two structural domains, F(1) containing the extramembraneous catalytic core and F(0) containing the membrane proton channel, linked together by a central stalk and a peripheral stalk. During catalysis, ATP synthesis in the catalytic domain of F(1) is coupled via a rotary mechanism of the central stalk subunits to proton translocation. In terms of biological role, key component of the F(0) channel; it plays a direct role in translocation across the membrane. A homomeric c-ring of between 10-14 subunits forms the central stalk rotor element with the F(1) delta and epsilon subunits. In Clostridium beijerinckii (strain ATCC 51743 / NCIMB 8052) (Clostridium acetobutylicum), this protein is ATP synthase subunit c.